A 485-amino-acid chain; its full sequence is Adenosylhomocysteinase (485 aa).

Residues Thr60, Asp146, and Glu208 each coordinate substrate. NAD(+) is bound at residue 209 to 211 (TTT). Positions 238 and 242 each coordinate substrate. NAD(+)-binding positions include Asn243, 272–277 (GYGDVG), Glu295, Asn330, 351–353 (IGH), and Asn399.

The protein belongs to the adenosylhomocysteinase family. It depends on NAD(+) as a cofactor.

The protein localises to the cytoplasm. It catalyses the reaction S-adenosyl-L-homocysteine + H2O = L-homocysteine + adenosine. The protein operates within amino-acid biosynthesis; L-homocysteine biosynthesis; L-homocysteine from S-adenosyl-L-homocysteine: step 1/1. May play a key role in the regulation of the intracellular concentration of adenosylhomocysteine. The sequence is that of Adenosylhomocysteinase from Streptomyces coelicolor (strain ATCC BAA-471 / A3(2) / M145).